Reading from the N-terminus, the 491-residue chain is Glutamyl-tRNA(Gln) amidotransferase subunit A (491 aa).

Active-site charge relay system residues include Lys-76 and Ser-154. The Acyl-ester intermediate role is filled by Ser-178.

It belongs to the amidase family. GatA subfamily. Heterotrimer of A, B and C subunits.

It carries out the reaction L-glutamyl-tRNA(Gln) + L-glutamine + ATP + H2O = L-glutaminyl-tRNA(Gln) + L-glutamate + ADP + phosphate + H(+). Its function is as follows. Allows the formation of correctly charged Gln-tRNA(Gln) through the transamidation of misacylated Glu-tRNA(Gln) in organisms which lack glutaminyl-tRNA synthetase. The reaction takes place in the presence of glutamine and ATP through an activated gamma-phospho-Glu-tRNA(Gln). In Cereibacter sphaeroides (strain ATCC 17029 / ATH 2.4.9) (Rhodobacter sphaeroides), this protein is Glutamyl-tRNA(Gln) amidotransferase subunit A.